The sequence spans 612 residues: Cryptochrome-2 (612 aa).

A CNT2, binds chromophores to sense blue light and mediate CRY dimerization region spans residues 1 to 485; that stretch reads MKMDKKTIVW…TARELLAKAI (485 aa). Residues 5-134 enclose the Photolyase/cryptochrome alpha/beta domain; sequence KKTIVWFRRD…SVQSYNGDLL (130 aa). An FAD-binding site is contributed by Y232. 2 residues coordinate Mg(2+): N235 and S243. 244-248 serves as a coordination point for FAD; the sequence is TSLLS. H355 serves as a coordination point for Mg(2+). Residues N356 and 387–389 contribute to the FAD site; that span reads DAD. 356 to 357 serves as a coordination point for ATP; that stretch reads NR. An ATP-binding site is contributed by D406. The segment at 486 to 612 is CCT2/CCE2, mediates blue light signaling; sequence SRTREAQIMI…TTSLGKNGCK (127 aa). The interval 539 to 576 is disordered; sequence GSKRVKPEEEEERDMKKSRGFDERELFSTAESSSSSSV. The short motif at 541 to 555 is the Nuclear localization signal element; sequence KRVKPEEEEERDMKK. Positions 551–564 are enriched in basic and acidic residues; that stretch reads RDMKKSRGFDEREL. S587 carries the post-translational modification Phosphoserine; by CK1. The interval 590-612 is disordered; it reads KNLEGIQDSSDQITTSLGKNGCK. A compositionally biased stretch (polar residues) spans 596-612; sequence QDSSDQITTSLGKNGCK. 2 positions are modified to phosphoserine: S598 and S599. T603 bears the Phosphothreonine; by CK1 mark. Position 605 is a phosphoserine (S605).

It belongs to the DNA photolyase class-1 family. In terms of assembly, homodimer. Blue-light dependent dimerization. Interacts with COP1 and PHYB in the nucleus. Binds reversibly to CIBs proteins such as BHLH63/CIB1, BHLH78/CIB2, BHLH74/CIB4 and BHLH76/CIB5 after blue light illumination to stimulate their transcription factor activities. Interacts with PIF4 and PIF5 in the nucleus in response to low blue light (LBL). Binds to SPA1 in response to blue light, this interaction prevents SPA1/COP1 complex formation but stimulates interaction with COP1, and thus avoid COP1-dependent degradation of the transcription factors CO and HY5 by the proteasome and promotes hypocotyl elongation and floral initiation. Binding to ATP mediates conformational changes which facilitate flavin binding. Interacts with BIC1 in both darkness and light. Interacts with NRP. FAD serves as cofactor. The cofactor is (6R)-5,10-methylene-5,6,7,8-tetrahydrofolate. Post-translationally, phosphorylated by CK1.3 and CK1.4; in response to blue light. Required for degradation. Adopts an open conformation when phosphorylated upon photoexcitation and thus interacts with signaling partner proteins. Not autophosphorylated, even in complex with FAD cofactor. Ubiquitinated; in response to blue light. Mostly expressed in the shoot meristems and root tips, and, to a lower extent, in the cotyledons, hypocotyls, and roots.

The protein localises to the nucleus. Its subcellular location is the PML body. It is found in the cytoplasm. Its function is as follows. Photoreceptor that mediates primarily blue light inhibition of hypocotyl elongation and photoperiodic control of floral initiation, and regulates other light responses, including circadian rhythms, tropic growth, stomata opening, guard cell development, root development, bacterial and viral pathogen responses, abiotic stress responses, cell cycles, programmed cell death, apical dominance, fruit and ovule development, seed dormancy, and magnetoreception. Photoexcited cryptochromes interact with signaling partner proteins to alter gene expression at both transcriptional and post-translational levels and, consequently, regulate the corresponding metabolic and developmental programs. Blue-light absorbing flavoprotein that activates reversible flavin photoreduction via an electron transport chain comprising a tryptophan triad (W-321, W-374 and W-397), or via an alternative electron transport that involves small metabolites, including NADPH, NADH, and ATP. The half-life of the activated signaling state is about 16 minutes. Perceives low blue light (LBL) and responds by directly contacting two bHLH transcription factors, PIF4 and PIF5, at chromatin on E-box variant 5'-CA[CT]GTG-3' to promote their activity and stimulate specific gene expression to adapt global physiology (e.g. hypocotyl elongation and hyponastic growth in low blue light). In response to blue light, binds to CIB proteins (e.g. BHLH63/CIB1 and BHLH76/CIB5) to activate transcription and floral initiation. Mediates blue light-induced gene expression, floral initiation and hypocotyl elongation through the interaction with SPA1 that prevents formation of SPA1/COP1 complex but stimulates COP1 binding, and thus inhibits COP1-mediated degradation of transcription factors (e.g. CO and HY5). Promotes flowering time in continuous light (LL). Involved in shortening the circadian clock period, especially at 27 degrees Celsius, in blue light (BL). Required to maintain clock genes expression rhythm. Triggers nuclear accumulation of ROS in response to blue light illumination. Involved in blue light-dependent stomatal opening, transpiration and inhibition of stem and root growth, probably by regulating abscisic acid (ABA). Regulates the timing of flowering by promoting the expression of 'FLOWERING LOCUS T' (FT) in vascular bundles. Negatively regulated by 'FLOWERING LOCUS C' (FLC). General positive regulator of reversible low light-induced chromatin decompaction. Involved in triggering chromatin decondensation during floral transition. Together with phototropins, involved in phototropism regulation by various blue light fluence; blue light attenuates phototropism in high fluence rates (100 umol.m-2.s-1) but enhances phototropism in low fluence rates (&lt;1.0 umol.m-2.s-1). The effect of near-null magnetic field on flowering is altered by changes of blue light cycle and intensity in a CRY1/CRY2-dependent manner. Involved in the strigolactone signaling that regulates hypocotyl growth in response to blue light. Confers resistance to turnip crinkle virus (TCV) by preventing COP1-mediated proteasome-mediated degradation of RPP8/HRT, thus promoting its stability in light. Exposure to darkness or blue-light induces degradation of CRY2, and in turn of RPP8/HRT, resulting in susceptibility to TCV. In Arabidopsis thaliana (Mouse-ear cress), this protein is Cryptochrome-2.